Consider the following 164-residue polypeptide: Peptide deformylase (164 aa).

C87 and H129 together coordinate Fe cation. E130 is an active-site residue. Residue H133 participates in Fe cation binding.

The protein belongs to the polypeptide deformylase family. The cofactor is Fe(2+).

The catalysed reaction is N-terminal N-formyl-L-methionyl-[peptide] + H2O = N-terminal L-methionyl-[peptide] + formate. In terms of biological role, removes the formyl group from the N-terminal Met of newly synthesized proteins. Requires at least a dipeptide for an efficient rate of reaction. N-terminal L-methionine is a prerequisite for activity but the enzyme has broad specificity at other positions. This Thermotoga maritima (strain ATCC 43589 / DSM 3109 / JCM 10099 / NBRC 100826 / MSB8) protein is Peptide deformylase.